We begin with the raw amino-acid sequence, 183 residues long: Adenylate kinase (183 aa).

An ATP-binding site is contributed by 12 to 17 (GAGKGT). The segment at 32-61 (STGDLLRSEVAAGSELGKEAEAVMNRGELV) is NMP. Residues threonine 33, arginine 38, 59-61 (ELV), 86-89 (GFPR), and glutamine 93 contribute to the AMP site. The segment at 127 to 133 (SRGRADD) is LID. Arginine 128 lines the ATP pocket. AMP contacts are provided by arginine 130 and arginine 141. Glycine 169 lines the ATP pocket.

It belongs to the adenylate kinase family. Monomer.

The protein localises to the cytoplasm. It carries out the reaction AMP + ATP = 2 ADP. It participates in purine metabolism; AMP biosynthesis via salvage pathway; AMP from ADP: step 1/1. Catalyzes the reversible transfer of the terminal phosphate group between ATP and AMP. Plays an important role in cellular energy homeostasis and in adenine nucleotide metabolism. This Synechococcus sp. (strain CC9902) protein is Adenylate kinase.